A 566-amino-acid polypeptide reads, in one-letter code: Myo-inositol transporter 1A (566 aa).

Residues 1-64 lie on the Cytoplasmic side of the membrane; that stretch reads MSDEKNYGIS…ERTEKLTKFV (64 aa). Residues 65–85 traverse the membrane as a helical segment; that stretch reads VGLALFASVSGFCFGFDTGVI. Residues 86–106 lie on the Extracellular side of the membrane; sequence SAALVSIKDDFGHILDDTEKE. The chain crosses the membrane as a helical span at residues 107–127; that stretch reads WISAATSCGALVGALSSGALA. The Cytoplasmic portion of the chain corresponds to 128–140; the sequence is DRVGRKWTLAVGD. The helical transmembrane segment at 141–161 threads the bilayer; sequence VWFTLGAIIICSSFSVVQMIV. The Extracellular portion of the chain corresponds to 162 to 163; it reads GR. Residues 164-184 traverse the membrane as a helical segment; it reads AVLGLGVGTAAAIAPLYIAEV. The Cytoplasmic portion of the chain corresponds to 185–192; it reads APTRFRGA. Residues 193–213 traverse the membrane as a helical segment; the sequence is LVTVQSIAITGGQFFSYCIGI. The Extracellular portion of the chain corresponds to 214–222; sequence PLTGHNGWR. The helical transmembrane segment at 223–243 threads the bilayer; it reads IQFAIGIVPAVVQAAVVHFLP. At 244-313 the chain is on the cytoplasmic side; sequence ESPRYDLLRG…VLTEGKYRKP (70 aa). A helical membrane pass occupies residues 314–334; it reads AITALGIGIFQQLCGFNSLMY. Residues 335–349 lie on the Extracellular side of the membrane; the sequence is YAATIFSYAGFDNPT. A helical transmembrane segment spans residues 350-370; sequence SVGLIVSGTNWFFTFVAMMIL. The Cytoplasmic portion of the chain corresponds to 371–377; it reads DRVGKRR. The chain crosses the membrane as a helical span at residues 378–398; sequence ILLSTYPGMIAGLALASVAFW. Residues 399–421 are Extracellular-facing; sequence KMTGSTGHRLVEGTEYPQQWSNM. A helical transmembrane segment spans residues 422-442; sequence MLGMMVVFIAFYATGSGNITW. At 443 to 458 the chain is on the cytoplasmic side; it reads TVGEMFPLEMRGIGAS. The chain crosses the membrane as a helical span at residues 459–479; that stretch reads ILAGGVWAANIVISATFLTLM. Topologically, residues 480–485 are extracellular; it reads NAIGPT. A helical transmembrane segment spans residues 486–506; the sequence is PTFALYAGICLAGLIFIYFCY. The Cytoplasmic segment spans residues 507-566; it reads PEPSGLSLEEIQIIYNYGFGVQKSREIRAEHKLKAQEMRDRANSHIGGSATASDDQLNKV. The interval 546-566 is disordered; it reads DRANSHIGGSATASDDQLNKV. Over residues 556–566 the composition is skewed to polar residues; that stretch reads ATASDDQLNKV.

Belongs to the major facilitator superfamily. Sugar transporter (TC 2.A.1.1) family.

It is found in the cell membrane. The catalysed reaction is myo-inositol(out) + H(+)(out) = myo-inositol(in) + H(+)(in). Functionally, major transporter for myo-inositol. Plays a role in the traversal of the host blood-brain barrier. This is Myo-inositol transporter 1A from Cryptococcus neoformans var. grubii serotype A (strain H99 / ATCC 208821 / CBS 10515 / FGSC 9487) (Filobasidiella neoformans var. grubii).